Here is a 500-residue protein sequence, read N- to C-terminus: NAD(P)H-quinone oxidoreductase chain 4, chloroplastic (500 aa).

Transmembrane regions (helical) follow at residues 4–24 (FPWLTIIVVFPIFAGSLIFFL), 35–55 (YTICICILELLLTTYAFCYHF), 87–107 (IGPILLTGFITTLATLAAWPV), 134–154 (LLLFFIMWELELIPVYLLLAM), 167–187 (FILYTAGGSVFLLMGVLGVAL), 208–228 (VLEIIFYIGFFIAFAVKSPII), 242–262 (HYSTCMLLAGILLKMGAYGLI), 272–292 (AHSIFSPWLMIIGTIQIIYAA), 305–325 (IAYPSVSHMGFIIIGISSLTD), 330–350 (GALLQIISHGFIGAALFFLAG), 386–406 (LALPGMSGFVAELIVFFGIIT), 411–431 (LLIPKLLITFVMAIGIILTPI), and 462–482 (LFLSISIFLPVIGIGIYPDFV).

It belongs to the complex I subunit 4 family.

Its subcellular location is the plastid. The protein localises to the chloroplast thylakoid membrane. The enzyme catalyses a plastoquinone + NADH + (n+1) H(+)(in) = a plastoquinol + NAD(+) + n H(+)(out). The catalysed reaction is a plastoquinone + NADPH + (n+1) H(+)(in) = a plastoquinol + NADP(+) + n H(+)(out). The sequence is that of NAD(P)H-quinone oxidoreductase chain 4, chloroplastic from Solanum tuberosum (Potato).